The primary structure comprises 448 residues: UDP-N-acetylmuramoylalanine--D-glutamate ligase (448 aa).

An ATP-binding site is contributed by 112–118 (GSNAKST).

This sequence belongs to the MurCDEF family.

The protein resides in the cytoplasm. It carries out the reaction UDP-N-acetyl-alpha-D-muramoyl-L-alanine + D-glutamate + ATP = UDP-N-acetyl-alpha-D-muramoyl-L-alanyl-D-glutamate + ADP + phosphate + H(+). It functions in the pathway cell wall biogenesis; peptidoglycan biosynthesis. Cell wall formation. Catalyzes the addition of glutamate to the nucleotide precursor UDP-N-acetylmuramoyl-L-alanine (UMA). This chain is UDP-N-acetylmuramoylalanine--D-glutamate ligase, found in Acinetobacter baumannii (strain AB307-0294).